The chain runs to 141 residues: Mite group 2 allergen Lep d 2 (141 aa).

Residues 1-16 (MMKFIALFALVAVASA) form the signal peptide. 3 disulfides stabilise this stretch: Cys-24–Cys-133, Cys-37–Cys-42, and Cys-88–Cys-93. 3 tandem repeats follow at residues 64 to 65 (KV), 68 to 69 (KV), and 72 to 73 (KV). The 3 X 2 AA repeats of K-V stretch occupies residues 64–73 (KVTIKVLAKV).

The protein belongs to the NPC2 family. In terms of assembly, monomer.

It is found in the secreted. In Lepidoglyphus destructor (Storage mite), this protein is Mite group 2 allergen Lep d 2.